The chain runs to 485 residues: uncharacterized protein (485 aa).

The protein localises to the virion. This is an uncharacterized protein from Acanthamoeba polyphaga mimivirus (APMV).